Consider the following 480-residue polypeptide: Protein nucleotidyltransferase YdiU (480 aa).

Residues G84, G86, R87, K107, D119, G120, R170, and R177 each coordinate ATP. Residue D246 is the Proton acceptor of the active site. Positions 247 and 256 each coordinate Mg(2+). ATP is bound at residue D256.

Belongs to the SELO family. The cofactor is Mg(2+). Requires Mn(2+) as cofactor.

The enzyme catalyses L-seryl-[protein] + ATP = 3-O-(5'-adenylyl)-L-seryl-[protein] + diphosphate. The catalysed reaction is L-threonyl-[protein] + ATP = 3-O-(5'-adenylyl)-L-threonyl-[protein] + diphosphate. It catalyses the reaction L-tyrosyl-[protein] + ATP = O-(5'-adenylyl)-L-tyrosyl-[protein] + diphosphate. It carries out the reaction L-histidyl-[protein] + UTP = N(tele)-(5'-uridylyl)-L-histidyl-[protein] + diphosphate. The enzyme catalyses L-seryl-[protein] + UTP = O-(5'-uridylyl)-L-seryl-[protein] + diphosphate. The catalysed reaction is L-tyrosyl-[protein] + UTP = O-(5'-uridylyl)-L-tyrosyl-[protein] + diphosphate. Functionally, nucleotidyltransferase involved in the post-translational modification of proteins. It can catalyze the addition of adenosine monophosphate (AMP) or uridine monophosphate (UMP) to a protein, resulting in modifications known as AMPylation and UMPylation. In Pseudoalteromonas atlantica (strain T6c / ATCC BAA-1087), this protein is Protein nucleotidyltransferase YdiU.